A 535-amino-acid chain; its full sequence is RAN GTPase-activating protein 1 (535 aa).

The WPP stretch occupies residues 1 to 115 (MDHSAKTTQN…EESEVEVSKD (115 aa)). LRR repeat units lie at residues 208 to 231 (GSKL…AFAS), 236 to 259 (QHDL…AVRE), 264 to 287 (TDKI…AIAE), 320 to 343 (CSHL…ALAK), 353 to 376 (EIYM…LLKS), 377 to 400 (APSL…NLAA), 405 to 428 (KQSL…LIAK), 433 to 456 (HDQL…ALAQ), and 461 to 488 (KNTF…MFKD). The disordered stretch occupies residues 493–535 (LVPLDDNDPEGEDFEDEDEEEEGEDGNELESKLGSLKIKQGEE). Over residues 497 to 520 (DDNDPEGEDFEDEDEEEEGEDGNE) the composition is skewed to acidic residues.

The protein belongs to the RNA1 family. Homodimer. Interacts with WIP1 through its WPP domain. Component of Ran complexes at least composed of WIT1 or WIT2, RANGAP1 or RANGAP2, and WIP1 or WIP2 or WIP3. Interacts directly with WIT1, WIP2 and WIP3. Interacts with POK1.

The protein resides in the cytoplasm. The protein localises to the nucleus envelope. It is found in the nucleus membrane. Its subcellular location is the cytoskeleton. It localises to the spindle. The protein resides in the phragmoplast. Functionally, GTPase activator for the nuclear Ras-related regulatory protein Ran, converting it to the putatively inactive GDP-bound state. Plays a role in spatial signaling during cell division. The sequence is that of RAN GTPase-activating protein 1 (RANGAP1) from Arabidopsis thaliana (Mouse-ear cress).